We begin with the raw amino-acid sequence, 312 residues long: Small ribosomal subunit biogenesis GTPase RsgA (312 aa).

The CP-type G domain maps to 86–245; that stretch reads QSFLKRPAVA…LADTPGFNRP (160 aa). Residues 135–138 and 187–195 each bind GTP; these read TKID and GPSGVGKTS. Zn(2+) contacts are provided by C270, C275, H277, and C283.

The protein belongs to the TRAFAC class YlqF/YawG GTPase family. RsgA subfamily. In terms of assembly, monomer. Associates with 30S ribosomal subunit, binds 16S rRNA. The cofactor is Zn(2+).

The protein localises to the cytoplasm. One of several proteins that assist in the late maturation steps of the functional core of the 30S ribosomal subunit. Helps release RbfA from mature subunits. May play a role in the assembly of ribosomal proteins into the subunit. Circularly permuted GTPase that catalyzes slow GTP hydrolysis, GTPase activity is stimulated by the 30S ribosomal subunit. This Prochlorococcus marinus (strain NATL2A) protein is Small ribosomal subunit biogenesis GTPase RsgA.